Reading from the N-terminus, the 394-residue chain is uncharacterized protein (394 aa).

This is an uncharacterized protein from Bacillus subtilis (strain 168).